Consider the following 329-residue polypeptide: Beta-ketoacyl-[acyl-carrier-protein] synthase III (329 aa).

Catalysis depends on residues cysteine 123 and histidine 256. The segment at 257–261 is ACP-binding; sequence QANIR. Asparagine 286 is an active-site residue.

Belongs to the thiolase-like superfamily. FabH family. As to quaternary structure, homodimer.

It is found in the cytoplasm. It carries out the reaction malonyl-[ACP] + acetyl-CoA + H(+) = 3-oxobutanoyl-[ACP] + CO2 + CoA. The protein operates within lipid metabolism; fatty acid biosynthesis. In terms of biological role, catalyzes the condensation reaction of fatty acid synthesis by the addition to an acyl acceptor of two carbons from malonyl-ACP. Catalyzes the first condensation reaction which initiates fatty acid synthesis and may therefore play a role in governing the total rate of fatty acid production. Possesses both acetoacetyl-ACP synthase and acetyl transacylase activities. Its substrate specificity determines the biosynthesis of branched-chain and/or straight-chain of fatty acids. The chain is Beta-ketoacyl-[acyl-carrier-protein] synthase III from Burkholderia lata (strain ATCC 17760 / DSM 23089 / LMG 22485 / NCIMB 9086 / R18194 / 383).